The chain runs to 334 residues: Protein-methionine-sulfoxide reductase catalytic subunit MsrP (334 aa).

The tat-type signal signal peptide spans 1 to 44 (MKKIRPLTEADVTAESAFFMQRRQVLKALGISAAALSLPSTAQA). Mo-molybdopterin is bound by residues asparagine 88, 91-92 (YE), cysteine 146, threonine 181, asparagine 233, arginine 238, and 249-251 (GIK).

It belongs to the MsrP family. Heterodimer of a catalytic subunit (MsrP) and a heme-binding subunit (MsrQ). Mo-molybdopterin serves as cofactor. Predicted to be exported by the Tat system. The position of the signal peptide cleavage has not been experimentally proven.

It localises to the periplasm. The catalysed reaction is L-methionyl-[protein] + a quinone + H2O = L-methionyl-(S)-S-oxide-[protein] + a quinol. The enzyme catalyses L-methionyl-[protein] + a quinone + H2O = L-methionyl-(R)-S-oxide-[protein] + a quinol. Part of the MsrPQ system that repairs oxidized periplasmic proteins containing methionine sulfoxide residues (Met-O), using respiratory chain electrons. Thus protects these proteins from oxidative-stress damage caused by reactive species of oxygen and chlorine generated by the host defense mechanisms. MsrPQ is essential for the maintenance of envelope integrity under bleach stress, rescuing a wide series of structurally unrelated periplasmic proteins from methionine oxidation, including the primary periplasmic chaperone SurA and the lipoprotein Pal. The catalytic subunit MsrP is non-stereospecific, being able to reduce both (R-) and (S-) diastereoisomers of methionine sulfoxide. This chain is Protein-methionine-sulfoxide reductase catalytic subunit MsrP, found in Salmonella newport (strain SL254).